The sequence spans 413 residues: Elongation factor 1-alpha (413 aa).

Residues 1–7 (HVDSGKS), 77–81 (DAPGH), and 139–142 (NKMD) contribute to the GTP site. Positions 1-228 (HVDSGKSTTT…DAILPPARPT (228 aa)) constitute a tr-type G domain. E287 and E360 each carry 5-glutamyl glycerylphosphorylethanolamine.

This sequence belongs to the TRAFAC class translation factor GTPase superfamily. Classic translation factor GTPase family. EF-Tu/EF-1A subfamily.

The protein resides in the cytoplasm. This protein promotes the GTP-dependent binding of aminoacyl-tRNA to the A-site of ribosomes during protein biosynthesis. The sequence is that of Elongation factor 1-alpha from Heliocheilus albipunctella (Millet head miner).